The sequence spans 516 residues: Probable serine/threonine-protein kinase WNK3 (516 aa).

The 259-residue stretch at 22 to 280 (GRYKEVLGKG…AKELLDDPFL (259 aa)) folds into the Protein kinase domain. ATP-binding positions include 102 to 105 (TEVF) and lysine 152. The active-site Proton acceptor is aspartate 169. Residues 426–451 (SSPKAGAGDSRSPFAPRSNSKLSSAQ) form a disordered region. Residues 442-451 (RSNSKLSSAQ) show a composition bias toward polar residues. Residues 457–490 (EVGVIVEKLESLLRKQREEIEEMQRDQERIVTEF) adopt a coiled-coil conformation.

The protein belongs to the protein kinase superfamily. Ser/Thr protein kinase family. WNK subfamily.

It catalyses the reaction L-seryl-[protein] + ATP = O-phospho-L-seryl-[protein] + ADP + H(+). It carries out the reaction L-threonyl-[protein] + ATP = O-phospho-L-threonyl-[protein] + ADP + H(+). In terms of biological role, may regulate flowering time by modulating the photoperiod pathway. This chain is Probable serine/threonine-protein kinase WNK3 (WNK3), found in Arabidopsis thaliana (Mouse-ear cress).